The chain runs to 360 residues: Photosystem II protein D1 (360 aa).

3 helical membrane passes run 29-46 (YVGW…TATT), 118-133 (HFLL…QWEL), and 142-156 (WICV…AATA). His118 is a binding site for chlorophyll a. A pheophytin a-binding site is contributed by Tyr126. Residues Asp170 and Glu189 each coordinate [CaMn4O5] cluster. A helical membrane pass occupies residues 197–218 (FHMLGVAGVFGGSLFSAMHGSL). His198 is a binding site for chlorophyll a. A quinone contacts are provided by residues His215 and 264–265 (SF). His215 contacts Fe cation. His272 contributes to the Fe cation binding site. A helical membrane pass occupies residues 274-288 (FLGAWPVIGIWFTAM). Residues His332, Glu333, Asp342, and Ala344 each coordinate [CaMn4O5] cluster. Residues 345-360 (SGEQAPVALTAPAING) constitute a propeptide that is removed on maturation.

Belongs to the reaction center PufL/M/PsbA/D family. In terms of assembly, PSII is composed of 1 copy each of membrane proteins PsbA, PsbB, PsbC, PsbD, PsbE, PsbF, PsbH, PsbI, PsbJ, PsbK, PsbL, PsbM, PsbT, PsbX, PsbY, PsbZ, Psb30/Ycf12, peripheral proteins PsbO, CyanoQ (PsbQ), PsbU, PsbV and a large number of cofactors. It forms dimeric complexes. The D1/D2 heterodimer binds P680, chlorophylls that are the primary electron donor of PSII, and subsequent electron acceptors. It shares a non-heme iron and each subunit binds pheophytin, quinone, additional chlorophylls, carotenoids and lipids. D1 provides most of the ligands for the Mn4-Ca-O5 cluster of the oxygen-evolving complex (OEC). There is also a Cl(-1) ion associated with D1 and D2, which is required for oxygen evolution. The PSII complex binds additional chlorophylls, carotenoids and specific lipids. serves as cofactor. In terms of processing, tyr-161 forms a radical intermediate that is referred to as redox-active TyrZ, YZ or Y-Z. Post-translationally, C-terminally processed by CtpA; processing is essential to allow assembly of the oxygen-evolving complex and thus photosynthetic growth.

It localises to the cellular thylakoid membrane. It carries out the reaction 2 a plastoquinone + 4 hnu + 2 H2O = 2 a plastoquinol + O2. Functionally, photosystem II (PSII) is a light-driven water:plastoquinone oxidoreductase that uses light energy to abstract electrons from H(2)O, generating O(2) and a proton gradient subsequently used for ATP formation. It consists of a core antenna complex that captures photons, and an electron transfer chain that converts photonic excitation into a charge separation. The D1/D2 (PsbA/PsbD) reaction center heterodimer binds P680, the primary electron donor of PSII as well as several subsequent electron acceptors. The polypeptide is Photosystem II protein D1 (Microcystis aeruginosa).